The chain runs to 235 residues: Ubiquinone biosynthesis O-methyltransferase (235 aa).

Residues arginine 39, glycine 59, aspartate 80, and methionine 124 each contribute to the S-adenosyl-L-methionine site.

The protein belongs to the methyltransferase superfamily. UbiG/COQ3 family.

The enzyme catalyses a 3-demethylubiquinol + S-adenosyl-L-methionine = a ubiquinol + S-adenosyl-L-homocysteine + H(+). It catalyses the reaction a 3-(all-trans-polyprenyl)benzene-1,2-diol + S-adenosyl-L-methionine = a 2-methoxy-6-(all-trans-polyprenyl)phenol + S-adenosyl-L-homocysteine + H(+). It functions in the pathway cofactor biosynthesis; ubiquinone biosynthesis. Its function is as follows. O-methyltransferase that catalyzes the 2 O-methylation steps in the ubiquinone biosynthetic pathway. This Vibrio parahaemolyticus serotype O3:K6 (strain RIMD 2210633) protein is Ubiquinone biosynthesis O-methyltransferase.